The following is a 338-amino-acid chain: Fe(3+)-binding periplasmic protein (338 aa).

The first 26 residues, 1-26 (MKLRISSLGPVALLASSMMLAFGAQA), serve as a signal peptide directing secretion. Fe cation is bound by residues His-40, Glu-88, Tyr-224, and Tyr-225.

The protein belongs to the bacterial solute-binding protein 1 family. The complex is composed of two ATP-binding proteins (FbpC), two transmembrane proteins (FbpB) and a solute-binding protein (FbpA).

The protein resides in the periplasm. Its function is as follows. Part of the ABC transporter complex FbpABC (TC 3.A.1.10.1) involved in Fe(3+) ions import. This protein specifically binds Fe(3+) and is involved in its transmembrane transport. This is Fe(3+)-binding periplasmic protein (fbpA) from Serratia marcescens.